We begin with the raw amino-acid sequence, 251 residues long: Imidazole glycerol phosphate synthase subunit HisF (251 aa).

Residues D11 and D130 contribute to the active site.

This sequence belongs to the HisA/HisF family. Heterodimer of HisH and HisF.

The protein resides in the cytoplasm. It catalyses the reaction 5-[(5-phospho-1-deoxy-D-ribulos-1-ylimino)methylamino]-1-(5-phospho-beta-D-ribosyl)imidazole-4-carboxamide + L-glutamine = D-erythro-1-(imidazol-4-yl)glycerol 3-phosphate + 5-amino-1-(5-phospho-beta-D-ribosyl)imidazole-4-carboxamide + L-glutamate + H(+). It functions in the pathway amino-acid biosynthesis; L-histidine biosynthesis; L-histidine from 5-phospho-alpha-D-ribose 1-diphosphate: step 5/9. IGPS catalyzes the conversion of PRFAR and glutamine to IGP, AICAR and glutamate. The HisF subunit catalyzes the cyclization activity that produces IGP and AICAR from PRFAR using the ammonia provided by the HisH subunit. The polypeptide is Imidazole glycerol phosphate synthase subunit HisF (Chlorobaculum parvum (strain DSM 263 / NCIMB 8327) (Chlorobium vibrioforme subsp. thiosulfatophilum)).